Consider the following 377-residue polypeptide: Alanine dehydrogenase (377 aa).

2 residues coordinate substrate: Arg-15 and Lys-74. Residue His-95 is the Proton donor/acceptor of the active site. NAD(+) is bound by residues Ser-133, Asp-197, Arg-202, Ser-219, 238–239 (VL), 266–269 (VAID), and 304–307 (VGNM). Asp-269 (proton donor/acceptor) is an active-site residue.

It belongs to the AlaDH/PNT family. Homohexamer.

It catalyses the reaction L-alanine + NAD(+) + H2O = pyruvate + NH4(+) + NADH + H(+). It participates in organosulfur degradation; alkanesulfonate degradation. In terms of biological role, involved in an anaerobic respiration pathway that converts the sulfonate taurine (2-aminoethanesulfonate) to ammonia, acetate and sulfide. Acts as an alanine dehydrogenase that regenerates pyruvate, the amino group acceptor for the taurine--pyruvate aminotransferase enzyme, and liberates ammonia. This is Alanine dehydrogenase from Bilophila wadsworthia (strain 3_1_6).